Reading from the N-terminus, the 160-residue chain is Single-stranded DNA-binding protein 2 (160 aa).

The SSB domain maps to 2–104 (MNRVVLVGRL…VVAESVQFLE (103 aa)). A disordered region spans residues 107–160 (NNNVEGATSNNYQNKANYSNNNQTSSYRADTSQKSDSFASEGKPIDINEDDLPF). Residues 115-129 (SNNYQNKANYSNNNQ) show a composition bias toward low complexity. The segment covering 130–144 (TSSYRADTSQKSDSF) has biased composition (polar residues). The Important for interaction with partner proteins signature appears at 155 to 160 (EDDLPF).

Homotetramer.

Functionally, plays an important role in DNA replication, recombination and repair. Binds to ssDNA and to an array of partner proteins to recruit them to their sites of action during DNA metabolism. The protein is Single-stranded DNA-binding protein 2 (ssb2) of Listeria monocytogenes serovar 1/2a (strain ATCC BAA-679 / EGD-e).